A 1203-amino-acid polypeptide reads, in one-letter code: DNA-directed RNA polymerase subunit beta' (1203 aa).

Zn(2+) contacts are provided by Cys-60, Cys-62, Cys-75, and Cys-78. Mg(2+)-binding residues include Asp-449, Asp-451, and Asp-453. Residues Cys-818, Cys-892, Cys-899, and Cys-902 each coordinate Zn(2+).

This sequence belongs to the RNA polymerase beta' chain family. The RNAP catalytic core consists of 2 alpha, 1 beta, 1 beta' and 1 omega subunit. When a sigma factor is associated with the core the holoenzyme is formed, which can initiate transcription. The cofactor is Mg(2+). Requires Zn(2+) as cofactor.

The catalysed reaction is RNA(n) + a ribonucleoside 5'-triphosphate = RNA(n+1) + diphosphate. Its function is as follows. DNA-dependent RNA polymerase catalyzes the transcription of DNA into RNA using the four ribonucleoside triphosphates as substrates. This Bacillus anthracis protein is DNA-directed RNA polymerase subunit beta'.